Here is an 88-residue protein sequence, read N- to C-terminus: MANSPQAKKRARQNDKARAHNASLRSMVRTYLKKVVAAIEAGDAETAKAAYAVAIPVLDRVADKGIIHKNKAARHKSRLNAKIKALSA.

The tract at residues 1 to 23 (MANSPQAKKRARQNDKARAHNAS) is disordered.

It belongs to the bacterial ribosomal protein bS20 family.

Binds directly to 16S ribosomal RNA. The chain is Small ribosomal subunit protein bS20 from Saccharophagus degradans (strain 2-40 / ATCC 43961 / DSM 17024).